A 226-amino-acid polypeptide reads, in one-letter code: Histone H2B.v1 (226 aa).

Residues 100 to 130 (FNSAKQYPPQPPPAKTATPSSPSSIPAPPIS) are disordered. Residues 114-123 (KTATPSSPSS) show a composition bias toward low complexity.

Belongs to the histone H2B family.

The protein is Histone H2B.v1 (H2Bv1) of Dictyostelium discoideum (Social amoeba).